An 835-amino-acid chain; its full sequence is Transcription intermediary factor 1-beta (835 aa).

Residues 1-19 are compositionally biased toward low complexity; the sequence is MAASAAAASAAAASAASGS. Residues 1 to 49 are disordered; sequence MAASAAAASAAAASAASGSPGPGEGSAGGEKRSTAPSAAASASASAAAS. An N-acetylalanine modification is found at A2. Phosphoserine occurs at positions 19 and 26. K31 participates in a covalent cross-link: Glycyl lysine isopeptide (Lys-Gly) (interchain with G-Cter in SUMO2). The span at 35 to 49 shows a compositional bias: low complexity; that stretch reads APSAAASASASAAAS. At S50 the chain carries Phosphoserine. The RING-type zinc-finger motif lies at 65-121; sequence CGVCRERLRPEREPRLLPCLHSACSACLGPAAPAAANSSGDGGAAGDGTVVDCPVCK. Positions 65 to 376 are RBCC domain; the sequence is CGVCRERLRP…LIYFQLHRAL (312 aa). K127 is covalently cross-linked (Glycyl lysine isopeptide (Lys-Gly) (interchain with G-Cter in SUMO2)). S138 bears the Phosphoserine mark. The segment at 148–195 adopts a B box-type 1; atypical zinc-finger fold; sequence DANQCCTSCEDNAPATSYCVECSEPLCETCVEAHQRVKYTKDHTVRST. Residues C153, C156, C177, and H181 each coordinate Zn(2+). K199 is covalently cross-linked (Glycyl lysine isopeptide (Lys-Gly) (interchain with G-Cter in SUMO2)). The B box-type 2 zinc finger occupies 204–245; it reads ERTVYCNVHKHEPLVLFCESCDTLTCRDCQLNAHKDHQYQFL. 4 residues coordinate Zn(2+): C209, H212, C232, and H237. The interval 246–376 is leucine zipper alpha helical coiled-coil region; it reads EDAVRNQRKL…LIYFQLHRAL (131 aa). The segment at 247–376 is interaction with MAGEC2; it reads DAVRNQRKLL…LIYFQLHRAL (130 aa). Residues K254 and K261 each participate in a glycyl lysine isopeptide (Lys-Gly) (interchain with G-Cter in SUMO2) cross-link. K266 is modified (N6-acetyllysine). K272 participates in a covalent cross-link: Glycyl lysine isopeptide (Lys-Gly) (interchain with G-Cter in SUMO2). At K304 the chain carries N6-acetyllysine; alternate. K304 is covalently cross-linked (Glycyl lysine isopeptide (Lys-Gly) (interchain with G-Cter in SUMO2); alternate). K319 participates in a covalent cross-link: Glycyl lysine isopeptide (Lys-Gly) (interchain with G-Cter in SUMO2). An N6-acetyllysine modification is found at K340. A Glycyl lysine isopeptide (Lys-Gly) (interchain with G-Cter in SUMO2) cross-link involves residue K366. An involved in binding PPP1CA region spans residues 366 to 370; sequence KLIYF. K377 carries the post-translational modification N6-acetyllysine; alternate. A Glycyl lysine isopeptide (Lys-Gly) (interchain with G-Cter in SUMO2); alternate cross-link involves residue K377. A Glycyl lysine isopeptide (Lys-Gly) (interchain with G-Cter in SUMO1); alternate cross-link involves residue K377. Residue K407 forms a Glycyl lysine isopeptide (Lys-Gly) (interchain with G-Cter in SUMO2) linkage. Residues 411–480 are disordered; that stretch reads ERPGTNSTGP…SRSGEGEVSG (70 aa). Residue S417 is modified to Phosphoserine. K434 participates in a covalent cross-link: Glycyl lysine isopeptide (Lys-Gly) (interchain with G-Cter in SUMO2). The segment covering 434-443 has biased composition (polar residues); the sequence is KQGSGSSQPM. S437, S439, and S453 each carry phosphoserine. A Glycyl lysine isopeptide (Lys-Gly) (interchain with G-Cter in SUMO2); alternate cross-link involves residue K469. K469 participates in a covalent cross-link: Glycyl lysine isopeptide (Lys-Gly) (interchain with G-Cter in SUMO1); alternate. R470 is subject to Citrulline. At S471 the chain carries Phosphoserine. R472 bears the Citrulline mark. 3 positions are modified to phosphoserine: S473, S479, and S489. The HP1 box stretch occupies residues 476–513; sequence GEVSGLMRKVPRVSLERLDLDLTADSQPPVFKVFPGST. Positions 481–494 match the PxVxL motif motif; it reads LMRKVPRVSLERLD. Residue T498 is modified to Phosphothreonine. S501 is modified (phosphoserine). K507 is covalently cross-linked (Glycyl lysine isopeptide (Lys-Gly) (interchain with G-Cter in SUMO2)). At T541 the chain carries Phosphothreonine. Residue K554 forms a Glycyl lysine isopeptide (Lys-Gly) (interchain with G-Cter in SUMO2); alternate linkage. A Glycyl lysine isopeptide (Lys-Gly) (interchain with G-Cter in SUMO); alternate cross-link involves residue K554. K575 participates in a covalent cross-link: Glycyl lysine isopeptide (Lys-Gly) (interchain with G-Cter in SUMO2). The disordered stretch occupies residues 584 to 618; the sequence is GPGAEGPRLASPSGSTSSGLEVVAPEGTSAPGGGP. S594 is subject to Phosphoserine. A PHD-type zinc finger spans residues 625 to 672; that stretch reads ATICRVCQKPGDLVMCNQCEFCFHLDCHLPALQDVPGEEWSCSLCHVL. A Glycyl lysine isopeptide (Lys-Gly) (interchain with G-Cter in SUMO) cross-link involves residue K676. S683, S689, and S697 each carry phosphoserine. One can recognise a Bromo domain in the interval 695–799; the sequence is KLSPANQRKC…RFFETRMNEA (105 aa). K750 participates in a covalent cross-link: Glycyl lysine isopeptide (Lys-Gly) (interchain with G-Cter in SUMO2); alternate. K750 is covalently cross-linked (Glycyl lysine isopeptide (Lys-Gly) (interchain with G-Cter in SUMO1); alternate). A Glycyl lysine isopeptide (Lys-Gly) (interchain with G-Cter in SUMO); alternate cross-link involves residue K750. S752 bears the Phosphoserine mark. Position 755 is a phosphotyrosine (Y755). The residue at position 757 (S757) is a Phosphoserine. An N6-acetyllysine; alternate mark is found at K770, K774, and K779. Glycyl lysine isopeptide (Lys-Gly) (interchain with G-Cter in SUMO2); alternate cross-links involve residues K770, K774, and K779. K779 is covalently cross-linked (Glycyl lysine isopeptide (Lys-Gly) (interchain with G-Cter in SUMO1); alternate). S784 carries the phosphoserine modification. Residue K804 forms a Glycyl lysine isopeptide (Lys-Gly) (interchain with G-Cter in SUMO2); alternate linkage. A Glycyl lysine isopeptide (Lys-Gly) (interchain with G-Cter in SUMO); alternate cross-link involves residue K804. The disordered stretch occupies residues 815–835; it reads MSLPGAGLSSQELSGGPGDGP. Position 824 is a phosphoserine; by ATM and ATR and dsDNA kinase (S824).

The protein belongs to the TRIM/RBCC family. In terms of assembly, interacts with SETX. Oligomer; the RBCC domain homotrimerizes and interacts with one molecule of KRAB to form the KRAB-KAP1 corepressor complex. Binding to a KRAB domain is an absolute requirement for silencing gene expression. Interacts with CEBPB and NR3C1. Interacts with a number of KRAB-ZFP proteins including ZNF10, ZFP53, ZFP68, ZNF382 and ZNF256. Interacts with NCOR1, NR3C1 and CHD3. Interacts with CEBPB (via the RING-type and PHD-type zinc fingers). Component of a ternary complex that includes TRIM28, a HP1 protein (CBX1, CBX3 OR CBX5), a KRAB domain-containing protein, and DNA. Interacts with CBX5 (via the PxVxL motif); the interaction occurs in interphase nuclei and competes for binding POGZ. Interacts with POGZ; the interaction competes for interaction with CBX5. Interacts with SETDB1; the interaction is enhanced by KAP1 sumoylation, stimulates SETDB1 histone methyltransferase activity and gene silencing. Interacts (via the PHD-type zinc finger) with UBE2I; the interaction is required for sumoylation and repressor activity. Component of the TRIM28/KAP1-ERBB4-MDM2 complex involved in connecting growth factor and DNA damage responses. Interacts directly with ERBB4; the interaction represses ERBB4-mediated transcription activity. Interacts with MDM2; the interaction contributes to p53/TP53 inactivation. Component of the TRIM28/KAP1-MDM2-p53/TP53; involved in regulating p53/TP53 stabilization and activity. Interacts (via the leucine zipper alpha helical coiled-coil) with E2F1 (central region); the interaction inhibits E2F1 acetylation and transcriptional activity. Interacts with PPP1CA; the interaction dephosphorylates TRIM28 at Ser-824 and forms a complex at the p21 promoter site. Interacts with PPP1CB; the interaction is weak but is increased on dephosphorylation at Ser-824. Interacts with FES/FPS. Interacts with SMARCAD1. Interacts with, and sumoylates IRF7. Interacts with MAGEC2. Part of a complex composed of TRIM28, HDAC1, HDAC2 and EHMT2. Interacts with AICDA. Interacts (via the RBCC domain) with KOX1 (via the KRAB domain), ZNF268 (via the KRAB domain) and ZNF300 (via the KRAB domain); the interactions increase KOX1, ZNF268 and ZNF300 nuclear localization activities. The large PER complex involved in the histone methylation is composed of at least PER2, CBX3, TRIM28, SUV39H1 and/or SUV39H2; CBX3 mediates the formation of the complex. Interacts with isoform 2 of ZFP90. Forms a complex with FOXP3 in the presence of isoform 2 of ZFP90. Interacts with NR4A3; the interactions potentiates NR4A3 activity on NurRE promoter. Interacts (unphosphorylated or phosphorylated form) with ZBTB1 (via BTB domain). Probably part of a corepressor complex containing ZNF304, TRIM28, SETDB1 and DNMT1. Interacts with ATRX. Forms a complex with ATRX, SETDB1 and ZNF274. Interacts with ZFP568; the interaction mediates ZFP568 transcriptional repression activity. Interacts with RRP1B. Interacts with CRY1. Interacts with ZNF263; recruited to the SIX3 promoter along with other proteins involved in chromatin modification and transcriptional corepression where it contributes to transcriptional repression. Interacts with CYREN (via XLF motif). Interacts with TRIM17; this interaction prevents TRIM28 activity. Interacts with ZNF746. Interacts with PHF13. Interacts with ZNF354C. Interacts with ZNF432; the interaction is independent of PARP1. (Microbial infection) Interacts with herpes virus 8 protein LANA1; this interaction facilitates establishment of viral latency. Post-translationally, ATM-induced phosphorylation on Ser-824 represses sumoylation leading to the de-repression of expression of a subset of genes involved in cell cycle control and apoptosis in response to genotoxic stress. Dephosphorylation by the phosphatases, PPP1CA and PP1CB forms, allows sumoylation and expression of TRIM28 target genes. Sumoylation/desumoylation events regulate TRIM28-mediated transcriptional repression. Sumoylation is required for interaction with CHD3 and SETDB1 and the corepressor activity. Represses and is repressed by Ser-824 phosphorylation. Enhances the TRIM28 corepressor activity, inhibiting transcriptional activity of a number of genes including GADD45A and CDKN1A/p21. Lys-554, Lys-779 and Lys-804 are the major sites of sumoylation. In response to Dox-induced DNA damage, enhanced phosphorylation on Ser-824 prevents sumoylation and allows de-repression of CDKN1A/p21. In terms of processing, auto-ubiquitinated; enhanced by MAGEA2 and MAGEC2. Post-translationally, citrullinated by PADI4. ADP-ribosylated by SIRT6, promoting TRIM28/KAP1 interaction with CBX5, thereby contributing to the packaging of LINE-1 retrotransposon elements into transcriptionally repressive heterochromatin. As to expression, expressed in all tissues tested including spleen, thymus, prostate, testis, ovary, small intestine, colon and peripheral blood leukocytes.

It localises to the nucleus. The enzyme catalyses S-ubiquitinyl-[E2 ubiquitin-conjugating enzyme]-L-cysteine + [acceptor protein]-L-lysine = [E2 ubiquitin-conjugating enzyme]-L-cysteine + N(6)-ubiquitinyl-[acceptor protein]-L-lysine.. Its pathway is protein modification; protein sumoylation. Functionally, nuclear corepressor for KRAB domain-containing zinc finger proteins (KRAB-ZFPs). Mediates gene silencing by recruiting CHD3, a subunit of the nucleosome remodeling and deacetylation (NuRD) complex, and SETDB1 (which specifically methylates histone H3 at 'Lys-9' (H3K9me)) to the promoter regions of KRAB target genes. Enhances transcriptional repression by coordinating the increase in H3K9me, the decrease in histone H3 'Lys-9 and 'Lys-14' acetylation (H3K9ac and H3K14ac, respectively) and the disposition of HP1 proteins to silence gene expression. Recruitment of SETDB1 induces heterochromatinization. May play a role as a coactivator for CEBPB and NR3C1 in the transcriptional activation of ORM1. Also a corepressor for ERBB4. Inhibits E2F1 activity by stimulating E2F1-HDAC1 complex formation and inhibiting E2F1 acetylation. May serve as a partial backup to prevent E2F1-mediated apoptosis in the absence of RB1. Important regulator of CDKN1A/p21(CIP1). Has E3 SUMO-protein ligase activity toward itself via its PHD-type zinc finger. Also specifically sumoylates IRF7, thereby inhibiting its transactivation activity. Ubiquitinates p53/TP53 leading to its proteasomal degradation; the function is enhanced by MAGEC2 and MAGEA2, and possibly MAGEA3 and MAGEA6. Mediates the nuclear localization of KOX1, ZNF268 and ZNF300 transcription factors. In association with isoform 2 of ZFP90, is required for the transcriptional repressor activity of FOXP3 and the suppressive function of regulatory T-cells (Treg). Probably forms a corepressor complex required for activated KRAS-mediated promoter hypermethylation and transcriptional silencing of tumor suppressor genes (TSGs) or other tumor-related genes in colorectal cancer (CRC) cells. Required to maintain a transcriptionally repressive state of genes in undifferentiated embryonic stem cells (ESCs). In ESCs, in collaboration with SETDB1, is also required for H3K9me3 and silencing of endogenous and introduced retroviruses in a DNA-methylation independent-pathway. Associates at promoter regions of tumor suppressor genes (TSGs) leading to their gene silencing. The SETDB1-TRIM28-ZNF274 complex may play a role in recruiting ATRX to the 3'-exons of zinc-finger coding genes with atypical chromatin signatures to establish or maintain/protect H3K9me3 at these transcriptionally active regions. (Microbial infection) Plays a critical role in the shutdown of lytic gene expression during the early stage of herpes virus 8 primary infection. This inhibition is mediated through interaction with herpes virus 8 protein LANA1. This is Transcription intermediary factor 1-beta from Homo sapiens (Human).